The following is a 334-amino-acid chain: Holliday junction branch migration complex subunit RuvB (334 aa).

Residues Met-1–Tyr-182 are large ATPase domain (RuvB-L). Residues Leu-21, Arg-22, Gly-63, Lys-66, Thr-67, Thr-68, Glu-129 to Phe-131, Arg-172, Tyr-182, and Arg-219 each bind ATP. Thr-67 serves as a coordination point for Mg(2+). The tract at residues Thr-183–Gln-253 is small ATPAse domain (RuvB-S). The segment at Lys-256 to Asp-334 is head domain (RuvB-H). Positions 311 and 316 each coordinate DNA.

The protein belongs to the RuvB family. As to quaternary structure, homohexamer. Forms an RuvA(8)-RuvB(12)-Holliday junction (HJ) complex. HJ DNA is sandwiched between 2 RuvA tetramers; dsDNA enters through RuvA and exits via RuvB. An RuvB hexamer assembles on each DNA strand where it exits the tetramer. Each RuvB hexamer is contacted by two RuvA subunits (via domain III) on 2 adjacent RuvB subunits; this complex drives branch migration. In the full resolvosome a probable DNA-RuvA(4)-RuvB(12)-RuvC(2) complex forms which resolves the HJ.

It is found in the cytoplasm. The enzyme catalyses ATP + H2O = ADP + phosphate + H(+). The RuvA-RuvB-RuvC complex processes Holliday junction (HJ) DNA during genetic recombination and DNA repair, while the RuvA-RuvB complex plays an important role in the rescue of blocked DNA replication forks via replication fork reversal (RFR). RuvA specifically binds to HJ cruciform DNA, conferring on it an open structure. The RuvB hexamer acts as an ATP-dependent pump, pulling dsDNA into and through the RuvAB complex. RuvB forms 2 homohexamers on either side of HJ DNA bound by 1 or 2 RuvA tetramers; 4 subunits per hexamer contact DNA at a time. Coordinated motions by a converter formed by DNA-disengaged RuvB subunits stimulates ATP hydrolysis and nucleotide exchange. Immobilization of the converter enables RuvB to convert the ATP-contained energy into a lever motion, pulling 2 nucleotides of DNA out of the RuvA tetramer per ATP hydrolyzed, thus driving DNA branch migration. The RuvB motors rotate together with the DNA substrate, which together with the progressing nucleotide cycle form the mechanistic basis for DNA recombination by continuous HJ branch migration. Branch migration allows RuvC to scan DNA until it finds its consensus sequence, where it cleaves and resolves cruciform DNA. The sequence is that of Holliday junction branch migration complex subunit RuvB from Bacillus licheniformis (strain ATCC 14580 / DSM 13 / JCM 2505 / CCUG 7422 / NBRC 12200 / NCIMB 9375 / NCTC 10341 / NRRL NRS-1264 / Gibson 46).